The sequence spans 266 residues: Small ribosomal subunit protein mS42 (266 aa).

The protein belongs to the mitochondrion-specific ribosomal protein mS42 family. As to quaternary structure, component of the mitochondrial small ribosomal subunit (mt-SSU). Mature yeast 74S mitochondrial ribosomes consist of a small (37S) and a large (54S) subunit. The 37S small subunit contains a 15S ribosomal RNA (15S mt-rRNA) and 34 different proteins. The 54S large subunit contains a 21S rRNA (21S mt-rRNA) and 46 different proteins. mS42 forms a heterodimer with mS43, building a large protuberance adjacent to the mRNA channel exit in the mt-SSU body.

Its subcellular location is the mitochondrion. In terms of biological role, component of the mitochondrial ribosome (mitoribosome), a dedicated translation machinery responsible for the synthesis of mitochondrial genome-encoded proteins, including at least some of the essential transmembrane subunits of the mitochondrial respiratory chain. The mitoribosomes are attached to the mitochondrial inner membrane and translation products are cotranslationally integrated into the membrane. This Saccharomyces cerevisiae (strain ATCC 204508 / S288c) (Baker's yeast) protein is Small ribosomal subunit protein mS42 (RSM26).